The primary structure comprises 337 residues: Hairy/enhancer-of-split related with YRPW motif protein 2 (337 aa).

The segment at 1-52 is disordered; the sequence is MKRPCEETTSESDMDETIDVGSENNYSGQSTSSVIRLNSPTTTSQIMARKKR. Residues 8-18 show a composition bias toward acidic residues; the sequence is TTSESDMDETI. Positions 22 to 46 are enriched in polar residues; it reads SENNYSGQSTSSVIRLNSPTTTSQI. The segment at 47-116 is transcriptional repression and interaction with NCOR1 and SIN3A; that stretch reads MARKKRRGII…GGKGYFDAHA (70 aa). Positions 48–103 constitute a bHLH domain; the sequence is ARKKRRGIIEKRRRDRINNSLSELRRLVPTAFEKQGSAKLEKAEILQMTVDHLKML. The region spanning 122-157 is the Orange domain; it reads MSIGFRECLTEVARYLSSVEGLDSSDPLRVRLVSHL. Residues 307–325 show a composition bias toward polar residues; the sequence is LSVSATSSPQQTSSGTNNK. The disordered stretch occupies residues 307–337; that stretch reads LSVSATSSPQQTSSGTNNKPYRPWGTEVGAF. Positions 327 to 330 match the YRPW motif motif; the sequence is YRPW.

It belongs to the HEY family. As to quaternary structure, may self-associate. Interacts with GATA4, HES1 and HEYL. Interacts with HDAC1, NCOR1 and SIN3A. Interacts with ARNT and GATA6.

Its subcellular location is the nucleus. Downstream effector of Notch signaling which may be required for cardiovascular development. Transcriptional repressor which binds preferentially to the canonical E box sequence 5'-CACGTG-3'. Represses transcription by the cardiac transcriptional activators GATA4 and GATA6. This chain is Hairy/enhancer-of-split related with YRPW motif protein 2 (HEY2), found in Homo sapiens (Human).